The chain runs to 323 residues: Beta-ketoacyl-[acyl-carrier-protein] synthase III (323 aa).

Catalysis depends on residues Cys114 and His250. Residues 251–255 form an ACP-binding region; it reads QANIR. Asn280 is an active-site residue.

Belongs to the thiolase-like superfamily. FabH family. Homodimer.

Its subcellular location is the cytoplasm. It catalyses the reaction malonyl-[ACP] + acetyl-CoA + H(+) = 3-oxobutanoyl-[ACP] + CO2 + CoA. Its pathway is lipid metabolism; fatty acid biosynthesis. In terms of biological role, catalyzes the condensation reaction of fatty acid synthesis by the addition to an acyl acceptor of two carbons from malonyl-ACP. Catalyzes the first condensation reaction which initiates fatty acid synthesis and may therefore play a role in governing the total rate of fatty acid production. Possesses both acetoacetyl-ACP synthase and acetyl transacylase activities. Its substrate specificity determines the biosynthesis of branched-chain and/or straight-chain of fatty acids. In Roseobacter denitrificans (strain ATCC 33942 / OCh 114) (Erythrobacter sp. (strain OCh 114)), this protein is Beta-ketoacyl-[acyl-carrier-protein] synthase III.